Here is a 231-residue protein sequence, read N- to C-terminus: Chalcone--flavanone isomerase (231 aa).

Substrate contacts are provided by threonine 46, asparagine 112, and serine 189.

Belongs to the chalcone isomerase family.

It catalyses the reaction a chalcone = a flavanone.. It functions in the pathway secondary metabolite biosynthesis; flavonoid biosynthesis. In terms of biological role, catalyzes the intramolecular cyclization of bicyclic chalcones into tricyclic (S)-flavanones. Responsible for the isomerization of 4,2',4',6'-tetrahydroxychalcone (also termed chalcone) into naringenin. The sequence is that of Chalcone--flavanone isomerase (CHI) from Hordeum vulgare (Barley).